A 327-amino-acid polypeptide reads, in one-letter code: GTPase Obg (327 aa).

An Obg domain is found at 2–160 (HLFKDSLNLI…LNLRLELSLI (159 aa)). An OBG-type G domain is found at 161–326 (ADVGLVGLPN…LVSEFFSLAK (166 aa)). GTP contacts are provided by residues 167–174 (GLPNAGKS), 192–196 (FTTKI), 213–216 (DLPG), 280–283 (SKLD), and 307–309 (SIY). 2 residues coordinate Mg(2+): S174 and T194.

The protein belongs to the TRAFAC class OBG-HflX-like GTPase superfamily. OBG GTPase family. As to quaternary structure, monomer. The cofactor is Mg(2+).

Its subcellular location is the cytoplasm. Its function is as follows. An essential GTPase which binds GTP, GDP and possibly (p)ppGpp with moderate affinity, with high nucleotide exchange rates and a fairly low GTP hydrolysis rate. Plays a role in control of the cell cycle, stress response, ribosome biogenesis and in those bacteria that undergo differentiation, in morphogenesis control. The protein is GTPase Obg of Borrelia recurrentis (strain A1).